We begin with the raw amino-acid sequence, 243 residues long: Ubiquinone/menaquinone biosynthesis C-methyltransferase UbiE (243 aa).

S-adenosyl-L-methionine contacts are provided by residues Thr69, Asp90, and 116-117 (DA).

Belongs to the class I-like SAM-binding methyltransferase superfamily. MenG/UbiE family.

It catalyses the reaction a 2-demethylmenaquinol + S-adenosyl-L-methionine = a menaquinol + S-adenosyl-L-homocysteine + H(+). The catalysed reaction is a 2-methoxy-6-(all-trans-polyprenyl)benzene-1,4-diol + S-adenosyl-L-methionine = a 5-methoxy-2-methyl-3-(all-trans-polyprenyl)benzene-1,4-diol + S-adenosyl-L-homocysteine + H(+). It functions in the pathway quinol/quinone metabolism; menaquinone biosynthesis; menaquinol from 1,4-dihydroxy-2-naphthoate: step 2/2. The protein operates within cofactor biosynthesis; ubiquinone biosynthesis. Its function is as follows. Methyltransferase required for the conversion of demethylmenaquinol (DMKH2) to menaquinol (MKH2) and the conversion of 2-polyprenyl-6-methoxy-1,4-benzoquinol (DDMQH2) to 2-polyprenyl-3-methyl-6-methoxy-1,4-benzoquinol (DMQH2). The chain is Ubiquinone/menaquinone biosynthesis C-methyltransferase UbiE from Ralstonia pickettii (strain 12J).